A 238-amino-acid chain; its full sequence is Protein shisa-3 homolog (238 aa).

The N-terminal stretch at 1–21 (MRALLALCLLLGWLRWGPAGA) is a signal peptide. Residues 22–98 (QQSGEYCHGW…GITAQPVYVP (77 aa)) lie on the Lumenal side of the membrane. Residues 99–119 (FLIVGSIFIAFIILGSVVAIY) form a helical membrane-spanning segment. The Cytoplasmic portion of the chain corresponds to 120–238 (CCTCLRPKEP…GKSCPDFSSS (119 aa)). The interval 151-173 (TSTSPRAPSRQSSTATSSSSTGG) is disordered. Positions 159–173 (SRQSSTATSSSSTGG) are enriched in low complexity.

The protein belongs to the shisa family.

It localises to the endoplasmic reticulum membrane. Plays an essential role in the maturation of presomitic mesoderm cells by individual attenuation of both FGF and WNT signaling. The sequence is that of Protein shisa-3 homolog (SHISA3) from Homo sapiens (Human).